The following is a 335-amino-acid chain: Beta-hexosaminidase (335 aa).

Residues D60, R68, R133, and 163-164 each bind substrate; that span reads KH. H176 functions as the Proton donor/acceptor in the catalytic mechanism. The active-site Nucleophile is D247.

The protein belongs to the glycosyl hydrolase 3 family. NagZ subfamily.

The protein localises to the cytoplasm. It catalyses the reaction Hydrolysis of terminal non-reducing N-acetyl-D-hexosamine residues in N-acetyl-beta-D-hexosaminides.. It participates in cell wall biogenesis; peptidoglycan recycling. In terms of biological role, plays a role in peptidoglycan recycling by cleaving the terminal beta-1,4-linked N-acetylglucosamine (GlcNAc) from peptide-linked peptidoglycan fragments, giving rise to free GlcNAc, anhydro-N-acetylmuramic acid and anhydro-N-acetylmuramic acid-linked peptides. This is Beta-hexosaminidase from Stenotrophomonas maltophilia (strain R551-3).